Here is a 980-residue protein sequence, read N- to C-terminus: Phosphoenolpyruvate carboxylase (980 aa).

Active-site residues include His-182 and Lys-625.

Belongs to the PEPCase type 1 family. Requires Mg(2+) as cofactor.

The enzyme catalyses oxaloacetate + phosphate = phosphoenolpyruvate + hydrogencarbonate. Functionally, forms oxaloacetate, a four-carbon dicarboxylic acid source for the tricarboxylic acid cycle. This is Phosphoenolpyruvate carboxylase from Bordetella pertussis (strain Tohama I / ATCC BAA-589 / NCTC 13251).